The sequence spans 276 residues: 2-dehydro-3-deoxyphosphooctonate aldolase (276 aa).

This sequence belongs to the KdsA family.

The protein resides in the cytoplasm. It catalyses the reaction D-arabinose 5-phosphate + phosphoenolpyruvate + H2O = 3-deoxy-alpha-D-manno-2-octulosonate-8-phosphate + phosphate. Its pathway is carbohydrate biosynthesis; 3-deoxy-D-manno-octulosonate biosynthesis; 3-deoxy-D-manno-octulosonate from D-ribulose 5-phosphate: step 2/3. It participates in bacterial outer membrane biogenesis; lipopolysaccharide biosynthesis. The protein is 2-dehydro-3-deoxyphosphooctonate aldolase of Xanthomonas oryzae pv. oryzae (strain MAFF 311018).